The sequence spans 100 residues: MELNPTEKDKLLIFTAGLVAERRKARGLKLNYPEAVAFISAALLEGARDGMTVSELMHFGTTLLKRKDVMDGVPEMIAEVQVEATFPDGSKLVTVHQPIV.

Belongs to the urease gamma subunit family. As to quaternary structure, heterotrimer of UreA (gamma), UreB (beta) and UreC (alpha) subunits. Three heterotrimers associate to form the active enzyme.

The protein resides in the cytoplasm. The catalysed reaction is urea + 2 H2O + H(+) = hydrogencarbonate + 2 NH4(+). It participates in nitrogen metabolism; urea degradation; CO(2) and NH(3) from urea (urease route): step 1/1. This Acinetobacter baumannii (strain SDF) protein is Urease subunit gamma.